A 481-amino-acid polypeptide reads, in one-letter code: Acetyltransferase peniE (481 aa).

Active-site proton acceptor residues include histidine 164 and aspartate 411.

The protein belongs to the plant acyltransferase family. In terms of assembly, monomer.

Functionally, acetyltransferase; part of the gene cluster that mediates the biosynthesis of penifulvin A, a potent insecticidal sesquiterpene that features a [5.5.5.6]dioxafenestrane ring. The first step of the pathway is performed by the sesquiterpene cyclase peniA that generates the angular triquinane scaffold silphinene via cyclization of the linear farnesyl pyrophosphate (FPP). The cytochrome P450 monooxygenase peniB and the flavin-dependent monooxygenase peniC then catalyze a series of oxidation reactions to transform silphinene into penifulvin A. The dioxygenases peniD and peniF, as well as the acetyltransferase peniE, do not seem to be involved in the biosynthesis of penifulvin A. The polypeptide is Acetyltransferase peniE (Penicillium patulum (Penicillium griseofulvum)).